The following is a 95-amino-acid chain: MDARDIIRRPIITEASMAQTERKRYVFEVDTRATKPEIKKAIEEIFEVKVSGLNTANVRGKKKRQGRYVGYTRKLKKATVTLSKDSKDIQIFNEG.

The protein belongs to the universal ribosomal protein uL23 family. Part of the 50S ribosomal subunit. Contacts protein L29, and trigger factor when it is bound to the ribosome.

Functionally, one of the early assembly proteins it binds 23S rRNA. One of the proteins that surrounds the polypeptide exit tunnel on the outside of the ribosome. Forms the main docking site for trigger factor binding to the ribosome. This is Large ribosomal subunit protein uL23 from Leuconostoc mesenteroides subsp. mesenteroides (strain ATCC 8293 / DSM 20343 / BCRC 11652 / CCM 1803 / JCM 6124 / NCDO 523 / NBRC 100496 / NCIMB 8023 / NCTC 12954 / NRRL B-1118 / 37Y).